Consider the following 384-residue polypeptide: Putative 8-amino-7-oxononanoate synthase (384 aa).

A substrate-binding site is contributed by R18. A pyridoxal 5'-phosphate-binding site is contributed by 105–106 (GY). H130 contacts substrate. Pyridoxal 5'-phosphate-binding positions include S176, 201–204 (DDAH), and 233–236 (TLSK). K236 bears the N6-(pyridoxal phosphate)lysine mark. T349 serves as a coordination point for substrate.

It belongs to the class-II pyridoxal-phosphate-dependent aminotransferase family. BioF subfamily. In terms of assembly, homodimer. It depends on pyridoxal 5'-phosphate as a cofactor.

It catalyses the reaction 6-carboxyhexanoyl-[ACP] + L-alanine + H(+) = (8S)-8-amino-7-oxononanoate + holo-[ACP] + CO2. It participates in cofactor biosynthesis; biotin biosynthesis. Functionally, catalyzes the decarboxylative condensation of pimeloyl-[acyl-carrier protein] and L-alanine to produce 8-amino-7-oxononanoate (AON), [acyl-carrier protein], and carbon dioxide. The protein is Putative 8-amino-7-oxononanoate synthase (bioF) of Desulfovibrio desulfuricans (strain ATCC 27774 / DSM 6949 / MB).